Reading from the N-terminus, the 66-residue chain is Large ribosomal subunit protein bL33c (66 aa).

This sequence belongs to the bacterial ribosomal protein bL33 family.

The protein localises to the plastid. It localises to the chloroplast. The sequence is that of Large ribosomal subunit protein bL33c from Oenothera argillicola (Appalachian evening primrose).